Consider the following 542-residue polypeptide: TNF receptor-associated factor 6 (542 aa).

The disordered stretch occupies residues 32 to 54; the sequence is ESFLSPTENPSTISVSSSMPPDQ. The segment covering 35-52 has biased composition (polar residues); it reads LSPTENPSTISVSSSMPP. Residues 71–110 form an RING-type; degenerate zinc finger; it reads CPICLMGLRSAVQTPCGHRFCDSCIRKSIRDTGQKCPVDN. 2 TRAF-type zinc fingers span residues 151-203 and 204-260; these read KHLS…AVKQ and NHEQ…NELA. Residues 311–373 adopt a coiled-coil conformation; it reads QCKQELLNLR…STRELEAQQY (63 aa). Residues 374–520 form the MATH domain; that stretch reads QGIYVWRVEN…EDVLLVRCEV (147 aa). 489-496 is a binding site for substrate; it reads PKGFGYVT.

This sequence belongs to the TNF receptor-associated factor family. A subfamily. As to quaternary structure, homotrimer. Homooligomer.

The protein localises to the cytoplasm. It localises to the cell cortex. Its subcellular location is the nucleus. The protein resides in the lipid droplet. It carries out the reaction S-ubiquitinyl-[E2 ubiquitin-conjugating enzyme]-L-cysteine + [acceptor protein]-L-lysine = [E2 ubiquitin-conjugating enzyme]-L-cysteine + N(6)-ubiquitinyl-[acceptor protein]-L-lysine.. Its pathway is protein modification; protein ubiquitination. Its function is as follows. E3 ubiquitin ligase that, together with UBE2N and UBE2V1, mediates the synthesis of 'Lys-63'-linked-polyubiquitin chains conjugated to proteins, such as IKBKG, IRAK1, AKT1 and AKT2. Also mediates ubiquitination of free/unanchored polyubiquitin chain that leads to MAP3K7 activation. This chain is TNF receptor-associated factor 6 (traf6), found in Danio rerio (Zebrafish).